A 147-amino-acid chain; its full sequence is Ribonuclease H (147 aa).

One can recognise an RNase H type-1 domain in the interval 1–142 (MAGKVVMYTD…ADELANRGVR (142 aa)). The Mg(2+) site is built by Asp-10, Glu-48, Asp-70, and Asp-134.

The protein belongs to the RNase H family. As to quaternary structure, monomer. The cofactor is Mg(2+).

It is found in the cytoplasm. The catalysed reaction is Endonucleolytic cleavage to 5'-phosphomonoester.. Functionally, endonuclease that specifically degrades the RNA of RNA-DNA hybrids. The sequence is that of Ribonuclease H from Marinobacter nauticus (strain ATCC 700491 / DSM 11845 / VT8) (Marinobacter aquaeolei).